We begin with the raw amino-acid sequence, 133 residues long: Fatty acid-binding protein, heart (133 aa).

N-acetylvaline is present on V2. T8 carries the post-translational modification Phosphothreonine. Position 20 is a phosphotyrosine; by Tyr-kinases (Y20). Phosphoserine is present on S23. The residue at position 30 (T30) is a Phosphothreonine. Position 83 is a phosphoserine (S83). 127 to 129 (RTY) lines the (9Z)-octadecenoate pocket. 127 to 129 (RTY) contacts hexadecanoate. Octadecanoate is bound at residue 127 to 129 (RTY).

It belongs to the calycin superfamily. Fatty-acid binding protein (FABP) family.

It localises to the cytoplasm. Its function is as follows. FABPs are thought to play a role in the intracellular transport of long-chain fatty acids and their acyl-CoA esters. In Sus scrofa (Pig), this protein is Fatty acid-binding protein, heart (FABP3).